The following is a 189-amino-acid chain: Large ribosomal subunit protein bL9 (189 aa).

Belongs to the bacterial ribosomal protein bL9 family.

Binds to the 23S rRNA. This is Large ribosomal subunit protein bL9 from Cereibacter sphaeroides (strain ATCC 17025 / ATH 2.4.3) (Rhodobacter sphaeroides).